Here is a 300-residue protein sequence, read N- to C-terminus: 7-methylguanosine phosphate-specific 5'-nucleotidase (300 aa).

The Nucleophile role is filled by D41. D41 and D43 together coordinate Mg(2+). Catalysis depends on D43, which acts as the Proton donor. E88 contacts CMP. N(7)-methyl-GMP is bound at residue E88. Residues 156–157 and K205 contribute to the substrate site; that span reads SA. Mg(2+) is bound at residue D230. An N6-acetyllysine modification is found at K256.

It belongs to the pyrimidine 5'-nucleotidase family. Monomer.

It is found in the cytoplasm. It catalyses the reaction N(7)-methyl-GMP + H2O = N(7)-methylguanosine + phosphate. The enzyme catalyses CMP + H2O = cytidine + phosphate. The catalysed reaction is a ribonucleoside 5'-phosphate + H2O = a ribonucleoside + phosphate. Functionally, specifically hydrolyzes 7-methylguanosine monophosphate (m(7)GMP) to 7-methylguanosine and inorganic phosphate. The specific activity for m(7)GMP may protect cells against undesired salvage of m(7)GMP and its incorporation into nucleic acids. Also has weak activity for CMP. UMP and purine nucleotides are poor substrates. The sequence is that of 7-methylguanosine phosphate-specific 5'-nucleotidase (Nt5c3b) from Mus musculus (Mouse).